The following is a 243-amino-acid chain: Adenosylcobinamide-GDP ribazoletransferase (243 aa).

A run of 5 helical transmembrane segments spans residues 31-51, 55-75, 109-129, 135-155, and 188-208; these read LLFY…FNAL, APLL…SGGL, IAVV…VALI, IGLL…FLGT, and VVLA…CFYW.

It belongs to the CobS family. It depends on Mg(2+) as a cofactor.

Its subcellular location is the cell inner membrane. The enzyme catalyses alpha-ribazole + adenosylcob(III)inamide-GDP = adenosylcob(III)alamin + GMP + H(+). The catalysed reaction is alpha-ribazole 5'-phosphate + adenosylcob(III)inamide-GDP = adenosylcob(III)alamin 5'-phosphate + GMP + H(+). It functions in the pathway cofactor biosynthesis; adenosylcobalamin biosynthesis; adenosylcobalamin from cob(II)yrinate a,c-diamide: step 7/7. Functionally, joins adenosylcobinamide-GDP and alpha-ribazole to generate adenosylcobalamin (Ado-cobalamin). Also synthesizes adenosylcobalamin 5'-phosphate from adenosylcobinamide-GDP and alpha-ribazole 5'-phosphate. The protein is Adenosylcobinamide-GDP ribazoletransferase of Pseudomonas syringae pv. tomato (strain ATCC BAA-871 / DC3000).